The following is a 382-amino-acid chain: ATP phosphoribosyltransferase regulatory subunit (382 aa).

It belongs to the class-II aminoacyl-tRNA synthetase family. HisZ subfamily. Heteromultimer composed of HisG and HisZ subunits.

It localises to the cytoplasm. Its pathway is amino-acid biosynthesis; L-histidine biosynthesis; L-histidine from 5-phospho-alpha-D-ribose 1-diphosphate: step 1/9. Required for the first step of histidine biosynthesis. May allow the feedback regulation of ATP phosphoribosyltransferase activity by histidine. The polypeptide is ATP phosphoribosyltransferase regulatory subunit (Burkholderia multivorans (strain ATCC 17616 / 249)).